A 163-amino-acid chain; its full sequence is Zinc finger A20 and AN1 domain-containing stress-associated protein 3 (163 aa).

An A20-type zinc finger spans residues 7-41 (LQEPRLCANNCGFFGSTATQNLCSKCFRDLQHQEQ). Residues C13, C17, C29, and C32 each contribute to the Zn(2+) site. The tract at residues 57–101 (VGAAASSSVSPPPPPPADSKEIVEAKSEKRAAAEPEEADGPPQDP) is disordered. Residues 74-89 (DSKEIVEAKSEKRAAA) show a composition bias toward basic and acidic residues. An AN1-type zinc finger spans residues 98-144 (PQDPKRCLTCRRRVGITGFRCRCGFVFCGTHRYAEQHECSFDFKRMG). C104, C107, C118, C120, C125, H128, H134, and C136 together coordinate Zn(2+).

May be involved in environmental stress response. The protein is Zinc finger A20 and AN1 domain-containing stress-associated protein 3 (SAP3) of Arabidopsis thaliana (Mouse-ear cress).